Here is a 438-residue protein sequence, read N- to C-terminus: GTPase Obg (438 aa).

The region spanning Ala-6–Leu-164 is the Obg domain. The OBG-type G domain occupies Ala-165–Arg-335. GTP-binding positions include Gly-171–Ser-178, Phe-196–Val-200, Asp-217–Gly-220, Asn-287–Asp-290, and Ser-316–Val-318. Mg(2+) is bound by residues Ser-178 and Thr-198. The OCT domain occupies Val-358–Glu-438.

It belongs to the TRAFAC class OBG-HflX-like GTPase superfamily. OBG GTPase family. Monomer. Mg(2+) serves as cofactor.

The protein resides in the cytoplasm. Its function is as follows. An essential GTPase which binds GTP, GDP and possibly (p)ppGpp with moderate affinity, with high nucleotide exchange rates and a fairly low GTP hydrolysis rate. Plays a role in control of the cell cycle, stress response, ribosome biogenesis and in those bacteria that undergo differentiation, in morphogenesis control. In Thermotoga neapolitana (strain ATCC 49049 / DSM 4359 / NBRC 107923 / NS-E), this protein is GTPase Obg.